The chain runs to 571 residues: Gag-Pro polyprotein (571 aa).

Residue Gly-2 is the site of N-myristoyl glycine; by host attachment. Residues 100-103 (PPPY) carry the PPXY motif motif. 2 repeats span residues 342–362 (PPGP…CPTK) and 367–387 (PPGP…CPTL). CCHC-type zinc fingers lie at residues 345 to 362 (PCYR…CPTK) and 370 to 387 (PCPI…CPTL). The Protease; shared with dimeric partner role is filled by Thr-453.

In terms of assembly, homodimer; the homodimers are part of the immature particles. Interacts with human TSG101 and NEDD4; these interactions are essential for budding and release of viral particles. Homodimer; further assembles as homohexamers. Specific enzymatic cleavages by the viral protease yield mature proteins. The polyprotein is cleaved during and after budding, this process is termed maturation. The protease is autoproteolytically processed at its N- and C-termini. In terms of processing, myristoylated. Myristoylation of the matrix (MA) domain mediates the transport and binding of Gag polyproteins to the host plasma membrane and is required for the assembly of viral particles.

It is found in the virion. In terms of biological role, the matrix domain targets Gag, Gag-Pro and Gag-Pro-Pol polyproteins to the plasma membrane via a multipartite membrane binding signal, that includes its myristoylated N-terminus. Matrix protein. Its function is as follows. Forms the spherical core of the virus that encapsulates the genomic RNA-nucleocapsid complex. Functionally, binds strongly to viral nucleic acids and promote their aggregation. Also destabilizes the nucleic acids duplexes via highly structured zinc-binding motifs. In terms of biological role, the aspartyl protease mediates proteolytic cleavages of Gag and Gag-Pol polyproteins during or shortly after the release of the virion from the plasma membrane. Cleavages take place as an ordered, step-wise cascade to yield mature proteins. This process is called maturation. Displays maximal activity during the budding process just prior to particle release from the cell. This is Gag-Pro polyprotein from Bovine leukemia virus (isolate Japanese BLV-1) (BLV).